The sequence spans 585 residues: Adenine deaminase (585 aa).

It belongs to the metallo-dependent hydrolases superfamily. Adenine deaminase family. Mn(2+) is required as a cofactor.

It carries out the reaction adenine + H2O + H(+) = hypoxanthine + NH4(+). The sequence is that of Adenine deaminase from Halalkalibacterium halodurans (strain ATCC BAA-125 / DSM 18197 / FERM 7344 / JCM 9153 / C-125) (Bacillus halodurans).